Reading from the N-terminus, the 428-residue chain is Trigger factor (428 aa).

The region spanning glycine 163 to proline 248 is the PPIase FKBP-type domain.

Belongs to the FKBP-type PPIase family. Tig subfamily.

Its subcellular location is the cytoplasm. It catalyses the reaction [protein]-peptidylproline (omega=180) = [protein]-peptidylproline (omega=0). Its function is as follows. Involved in protein export. Acts as a chaperone by maintaining the newly synthesized protein in an open conformation. Functions as a peptidyl-prolyl cis-trans isomerase. This Alkaliphilus oremlandii (strain OhILAs) (Clostridium oremlandii (strain OhILAs)) protein is Trigger factor.